The following is a 1186-amino-acid chain: ATP-dependent helicase/deoxyribonuclease subunit B (1186 aa).

The protein belongs to the helicase family. AddB/RexB type 2 subfamily. In terms of assembly, heterodimer of AddA and RexB. Requires Mg(2+) as cofactor.

Its function is as follows. The heterodimer acts as both an ATP-dependent DNA helicase and an ATP-dependent, dual-direction single-stranded exonuclease. Recognizes the chi site generating a DNA molecule suitable for the initiation of homologous recombination. This subunit has 5' -&gt; 3' nuclease activity but not helicase activity. In Latilactobacillus sakei subsp. sakei (strain 23K) (Lactobacillus sakei subsp. sakei), this protein is ATP-dependent helicase/deoxyribonuclease subunit B.